We begin with the raw amino-acid sequence, 410 residues long: Phosphoglycerate kinase (410 aa).

Substrate is bound by residues 19 to 21 (DLN), R34, 57 to 60 (HQGK), R114, and R154. ATP is bound by residues E332 and 358–361 (GGHS).

This sequence belongs to the phosphoglycerate kinase family. As to quaternary structure, homodimer.

The protein resides in the cytoplasm. It catalyses the reaction (2R)-3-phosphoglycerate + ATP = (2R)-3-phospho-glyceroyl phosphate + ADP. The protein operates within carbohydrate degradation; glycolysis; pyruvate from D-glyceraldehyde 3-phosphate: step 2/5. The protein is Phosphoglycerate kinase (pgk) of Pyrococcus abyssi (strain GE5 / Orsay).